The sequence spans 252 residues: Streptothricin hydrolase (252 aa).

Residue cysteine 158 is the Nucleophile of the active site. The segment covering 230 to 242 (AVGPAAAPGLPVS) has biased composition (low complexity). The interval 230–252 (AVGPAAAPGLPVSPAAPPPSPVR) is disordered. Pro residues predominate over residues 243 to 252 (PAAPPPSPVR).

The protein belongs to the isochorismatase family.

It catalyses the reaction streptothricin F + H2O = streptothricin F acid. In terms of biological role, catalyzes the hydrolysis of the amide bond of streptolidine lactam, thereby conferring streptothricin (ST) resistance. Can hydrolyze streptothricin-F and streptothricin-D. However, this strain is believed to be a ST nonproducer, which raises the possibility that its true role may not be its involvement in self-resistance to STs. May catalyze the hydrolysis of naturally occurring cyclic amide compounds that are structurally related to STs. The polypeptide is Streptothricin hydrolase (sttH) (Streptomyces noursei (Streptomyces albulus)).